Here is a 285-residue protein sequence, read N- to C-terminus: CCR4-NOT transcription complex subunit 7 (285 aa).

Residues Asp40, Glu42, Asp161, Asp230, and Glu278 each coordinate a divalent metal cation.

The protein belongs to the CAF1 family. Component of the CCR4-NOT complex; distinct complexes seem to exist that differ in the participation of probably mutually exclusive catalytic subunits; the complex contains two deadenylase subunits, CNOT6 or CNOT6L, and CNOT7 or CNOT8. In the complex, interacts directly with CNOT1. Interacts with AGO2. Interacts with TOB1; recruited by TOB1 to a ternary complex with CPEB3 which is required for mRNA deadenylation and decay. Interacts with BTG1. Interacts with BTG2. Interacts with NANOS2. Interacts with ZFP36, ZFP36L1 and ZFP36L2; these interactions are inhibited in response to phorbol 12-myristate 13-acetate (PMA) treatment in a p38 MAPK-dependent manner. Interacts with BTG4. Interacts with EIF4E; this interaction is increased by CNOT7 interaction with BTG4. The cofactor is Mn(2+). It depends on Mg(2+) as a cofactor. Requires Co(2+) as cofactor.

Its subcellular location is the nucleus. It localises to the cytoplasm. The protein localises to the P-body. The protein resides in the cytoplasmic ribonucleoprotein granule. The enzyme catalyses Exonucleolytic cleavage of poly(A) to 5'-AMP.. Functionally, has 3'-5' poly(A) exoribonuclease activity for synthetic poly(A) RNA substrate. Its function seems to be partially redundant with that of CNOT8. Catalytic component of the CCR4-NOT complex which is one of the major cellular mRNA deadenylases and is linked to various cellular processes including bulk mRNA degradation, miRNA-mediated repression, translational repression during translational initiation and general transcription regulation. During miRNA-mediated repression the complex also seems to act as translational repressor during translational initiation. Additional complex functions may be a consequence of its influence on mRNA expression. Required for miRNA-mediated mRNA deadenylation. Associates with members of the BTG family such as TOB1 and BTG2 and is required for their anti-proliferative activity. In Bos taurus (Bovine), this protein is CCR4-NOT transcription complex subunit 7 (CNOT7).